The following is a 140-amino-acid chain: MNTLRYFDFGAARPVLLLIARIAVVLIFIIFGFPKMMGFDGTVQYMASLGAPMPMLAAIIAVVMEVPAAILIVLGFFTRPLAVLFIFYTLGTAVIGHHYWDMTGDAVGPNMINFWKNVSIAGAFLLLAITGPGAISLDRR.

Topologically, residues 1–13 are cytoplasmic; sequence MNTLRYFDFGAAR. Residues 14–34 traverse the membrane as a helical segment; the sequence is PVLLLIARIAVVLIFIIFGFP. Topologically, residues 35–56 are periplasmic; the sequence is KMMGFDGTVQYMASLGAPMPML. A helical transmembrane segment spans residues 57–77; that stretch reads AAIIAVVMEVPAAILIVLGFF. Topologically, residues 78–79 are cytoplasmic; the sequence is TR. The chain crosses the membrane as a helical span at residues 80-100; sequence PLAVLFIFYTLGTAVIGHHYW. The Periplasmic portion of the chain corresponds to 101–116; sequence DMTGDAVGPNMINFWK. The helical transmembrane segment at 117-137 threads the bilayer; it reads NVSIAGAFLLLAITGPGAISL. The Cytoplasmic portion of the chain corresponds to 138–140; sequence DRR.

It belongs to the DoxX family.

Its subcellular location is the cell inner membrane. This Escherichia coli (strain K12) protein is Inner membrane protein YphA (yphA).